The following is a 185-amino-acid chain: Large ribosomal subunit protein uL6 (185 aa).

It belongs to the universal ribosomal protein uL6 family. As to quaternary structure, part of the 50S ribosomal subunit.

Functionally, this protein binds to the 23S rRNA, and is important in its secondary structure. It is located near the subunit interface in the base of the L7/L12 stalk, and near the tRNA binding site of the peptidyltransferase center. This is Large ribosomal subunit protein uL6 from Staphylothermus marinus (strain ATCC 43588 / DSM 3639 / JCM 9404 / F1).